Reading from the N-terminus, the 282-residue chain is Shikimate dehydrogenase (NADP(+)) (282 aa).

Shikimate is bound by residues 18–20 and Thr65; that span reads SRS. The active-site Proton acceptor is Lys69. An NADP(+)-binding site is contributed by Glu81. Asn90 and Asp105 together coordinate shikimate. NADP(+) is bound by residues 130–134, 154–159, and Met222; these read GAGGA and NRTPAR. Tyr224 is a shikimate binding site. An NADP(+)-binding site is contributed by Gly245.

It belongs to the shikimate dehydrogenase family. Homodimer.

The enzyme catalyses shikimate + NADP(+) = 3-dehydroshikimate + NADPH + H(+). Its pathway is metabolic intermediate biosynthesis; chorismate biosynthesis; chorismate from D-erythrose 4-phosphate and phosphoenolpyruvate: step 4/7. Functionally, involved in the biosynthesis of the chorismate, which leads to the biosynthesis of aromatic amino acids. Catalyzes the reversible NADPH linked reduction of 3-dehydroshikimate (DHSA) to yield shikimate (SA). This chain is Shikimate dehydrogenase (NADP(+)), found in Acidovorax ebreus (strain TPSY) (Diaphorobacter sp. (strain TPSY)).